The following is a 250-amino-acid chain: Small ribosomal subunit protein uS2 (250 aa).

This sequence belongs to the universal ribosomal protein uS2 family.

The sequence is that of Small ribosomal subunit protein uS2 from Teredinibacter turnerae (strain ATCC 39867 / T7901).